The sequence spans 233 residues: Ion-translocating oxidoreductase complex subunit E (233 aa).

Transmembrane regions (helical) follow at residues 18–38 (ALVQ…ATNA), 39–59 (LGLG…VSAL), 69–89 (IPIY…LINA), 92–112 (FGLY…CIVI), 128–148 (ALDG…LGAL), and 182–202 (PFLL…LLAG).

Belongs to the NqrDE/RnfAE family. In terms of assembly, the complex is composed of six subunits: RnfA, RnfB, RnfC, RnfD, RnfE and RnfG.

It localises to the cell inner membrane. Part of a membrane-bound complex that couples electron transfer with translocation of ions across the membrane. This chain is Ion-translocating oxidoreductase complex subunit E, found in Yersinia pseudotuberculosis serotype O:1b (strain IP 31758).